The primary structure comprises 511 residues: Cysteine--tRNA ligase 2, cytoplasmic (511 aa).

Cys34 lines the Zn(2+) pocket. The 'HIGH' region signature appears at 36 to 46 (ITAYDFSHIGH). Residues Cys214, His239, and Glu243 each coordinate Zn(2+). Residues 271–275 (KMAKS) carry the 'KMSKS' region motif. ATP is bound at residue Lys274. TPR repeat units lie at residues 315–348 (ESSS…DGGK) and 368–401 (SKML…LKKM).

It belongs to the class-I aminoacyl-tRNA synthetase family. It depends on Zn(2+) as a cofactor.

It localises to the cytoplasm. The protein resides in the cytosol. It catalyses the reaction tRNA(Cys) + L-cysteine + ATP = L-cysteinyl-tRNA(Cys) + AMP + diphosphate. The chain is Cysteine--tRNA ligase 2, cytoplasmic from Arabidopsis thaliana (Mouse-ear cress).